The sequence spans 351 residues: Mediator of RNA polymerase II transcription subunit 4 (351 aa).

A coiled-coil region spans residues 30–68 (QKLAEELLAAEAELSKSLKLLETHQNNNARLQQLRQETS). 2 disordered regions span residues 156–217 (TQTQ…PAHL) and 256–351 (PRGY…DEDD). Polar residues predominate over residues 163–177 (NSFNLSFNGTVSTPI). Positions 182–198 (PTPTTTNDTQPSTQLPP) are enriched in low complexity. Positions 257-308 (RGYDPAEQERRRVAEEKARREAEERARLEREEAERKGREERERMAREREAAR) are enriched in basic and acidic residues. Residues 262–311 (AEQERRRVAEEKARREAEERARLEREEAERKGREERERMAREREAARLRN) are a coiled coil. The segment covering 340-351 (ADDDEDDEDEDD) has biased composition (acidic residues).

Belongs to the Mediator complex subunit 4 family. Component of the Mediator complex.

Its subcellular location is the nucleus. In terms of biological role, component of the Mediator complex, a coactivator involved in the regulated transcription of nearly all RNA polymerase II-dependent genes. Mediator functions as a bridge to convey information from gene-specific regulatory proteins to the basal RNA polymerase II transcription machinery. Mediator is recruited to promoters by direct interactions with regulatory proteins and serves as a scaffold for the assembly of a functional preinitiation complex with RNA polymerase II and the general transcription factors. In Chaetomium globosum (strain ATCC 6205 / CBS 148.51 / DSM 1962 / NBRC 6347 / NRRL 1970) (Soil fungus), this protein is Mediator of RNA polymerase II transcription subunit 4 (MED4).